We begin with the raw amino-acid sequence, 126 residues long: Small ribosomal subunit protein bS6 (126 aa).

The disordered stretch occupies residues 101–126; sequence VMMKAKEERTAKREDAAPRAEEAAAE. Residues 104–126 are compositionally biased toward basic and acidic residues; it reads KAKEERTAKREDAAPRAEEAAAE.

This sequence belongs to the bacterial ribosomal protein bS6 family.

Binds together with bS18 to 16S ribosomal RNA. In Aliivibrio salmonicida (strain LFI1238) (Vibrio salmonicida (strain LFI1238)), this protein is Small ribosomal subunit protein bS6.